We begin with the raw amino-acid sequence, 434 residues long: Putative magnesium transporter MRS2-D (434 aa).

Disordered regions lie at residues M1–E21, A126–A171, and E279–G311. Positions A9–E21 are enriched in low complexity. Over residues E279 to E291 the composition is skewed to basic and acidic residues. A run of 2 helical transmembrane segments spans residues G367–F387 and F405–L425.

It belongs to the CorA metal ion transporter (MIT) (TC 1.A.35.5) family.

The protein localises to the membrane. Putative magnesium transporter. The protein is Putative magnesium transporter MRS2-D (MRS2-D) of Oryza sativa subsp. indica (Rice).